We begin with the raw amino-acid sequence, 648 residues long: Bifunctional protein TilS/HprT (648 aa).

29–34 (SGGPDS) serves as a coordination point for ATP. A Mg(2+)-binding site is contributed by aspartate 627.

This sequence in the N-terminal section; belongs to the tRNA(Ile)-lysidine synthase family. In the C-terminal section; belongs to the purine/pyrimidine phosphoribosyltransferase family. It depends on Mg(2+) as a cofactor.

The protein resides in the cytoplasm. It carries out the reaction IMP + diphosphate = hypoxanthine + 5-phospho-alpha-D-ribose 1-diphosphate. The catalysed reaction is GMP + diphosphate = guanine + 5-phospho-alpha-D-ribose 1-diphosphate. The enzyme catalyses cytidine(34) in tRNA(Ile2) + L-lysine + ATP = lysidine(34) in tRNA(Ile2) + AMP + diphosphate + H(+). Ligates lysine onto the cytidine present at position 34 of the AUA codon-specific tRNA(Ile) that contains the anticodon CAU, in an ATP-dependent manner. Cytidine is converted to lysidine, thus changing the amino acid specificity of the tRNA from methionine to isoleucine. In Listeria monocytogenes serovar 1/2a (strain ATCC BAA-679 / EGD-e), this protein is Bifunctional protein TilS/HprT (tilS/hprT).